Here is a 232-residue protein sequence, read N- to C-terminus: Ubiquinone biosynthesis O-methyltransferase (232 aa).

The S-adenosyl-L-methionine site is built by R36, G55, D76, and M120.

This sequence belongs to the methyltransferase superfamily. UbiG/COQ3 family.

The catalysed reaction is a 3-demethylubiquinol + S-adenosyl-L-methionine = a ubiquinol + S-adenosyl-L-homocysteine + H(+). The enzyme catalyses a 3-(all-trans-polyprenyl)benzene-1,2-diol + S-adenosyl-L-methionine = a 2-methoxy-6-(all-trans-polyprenyl)phenol + S-adenosyl-L-homocysteine + H(+). It participates in cofactor biosynthesis; ubiquinone biosynthesis. Its function is as follows. O-methyltransferase that catalyzes the 2 O-methylation steps in the ubiquinone biosynthetic pathway. The polypeptide is Ubiquinone biosynthesis O-methyltransferase (Thiobacillus denitrificans (strain ATCC 25259 / T1)).